Here is a 200-residue protein sequence, read N- to C-terminus: Small ribosomal subunit protein uS4 (200 aa).

A disordered region spans residues 21-42 (GTGKELQKRPYPPGQHGPGQRR). The region spanning 92–155 (SRLDNLVYRL…RNLQVIKEAI (64 aa)) is the S4 RNA-binding domain.

This sequence belongs to the universal ribosomal protein uS4 family. Part of the 30S ribosomal subunit. Contacts protein S5. The interaction surface between S4 and S5 is involved in control of translational fidelity.

In terms of biological role, one of the primary rRNA binding proteins, it binds directly to 16S rRNA where it nucleates assembly of the body of the 30S subunit. Its function is as follows. With S5 and S12 plays an important role in translational accuracy. The protein is Small ribosomal subunit protein uS4 of Geobacillus thermodenitrificans (strain NG80-2).